The following is a 564-amino-acid chain: Tripeptidyl-peptidase 1 (564 aa).

An N-terminal signal peptide occupies residues 1 to 19; the sequence is MGLQACLLGLFALILSGKC. Positions 20–195 are cleaved as a propeptide — removed in mature form; the sequence is SYSPEPDQRR…PEPQVTGTVG (176 aa). A disulfide bridge connects residues C111 and C122. The Peptidase S53 domain occupies 199-564; that stretch reads GVTPSVIRKR…PALPKTLLNP (366 aa). 2 N-linked (GlcNAc...) asparagine glycosylation sites follow: N210 and N222. Catalysis depends on charge relay system residues E272 and D276. N286, N313, and N443 each carry an N-linked (GlcNAc...) asparagine glycan. 2 disulfide bridges follow: C365–C527 and C523–C538. S475 (charge relay system) is an active-site residue. 2 residues coordinate Ca(2+): D518 and V519. Ca(2+)-binding residues include G540, G542, and D544.

In terms of assembly, monomer. Interacts with CLN5. Interacts with CLN3. The cofactor is Ca(2+). In terms of processing, activated by autocatalytic proteolytical processing upon acidification. N-glycosylation is required for processing and activity.

The protein resides in the lysosome. The protein localises to the melanosome. The enzyme catalyses Release of an N-terminal tripeptide from a polypeptide, but also has endopeptidase activity.. Functionally, lysosomal serine protease with tripeptidyl-peptidase I activity. May act as a non-specific lysosomal peptidase which generates tripeptides from the breakdown products produced by lysosomal proteinases. Requires substrates with an unsubstituted N-terminus. The protein is Tripeptidyl-peptidase 1 (TPP1) of Pongo abelii (Sumatran orangutan).